Here is a 426-residue protein sequence, read N- to C-terminus: Enolase (426 aa).

Q163 lines the (2R)-2-phosphoglycerate pocket. The Proton donor role is filled by E205. Mg(2+) contacts are provided by D242, E283, and D310. The (2R)-2-phosphoglycerate site is built by K335, R364, S365, and K386. Catalysis depends on K335, which acts as the Proton acceptor.

It belongs to the enolase family. Mg(2+) serves as cofactor.

It is found in the cytoplasm. It localises to the secreted. Its subcellular location is the cell surface. The catalysed reaction is (2R)-2-phosphoglycerate = phosphoenolpyruvate + H2O. It participates in carbohydrate degradation; glycolysis; pyruvate from D-glyceraldehyde 3-phosphate: step 4/5. Catalyzes the reversible conversion of 2-phosphoglycerate (2-PG) into phosphoenolpyruvate (PEP). It is essential for the degradation of carbohydrates via glycolysis. The sequence is that of Enolase from Clavibacter michiganensis subsp. michiganensis (strain NCPPB 382).